The following is a 388-amino-acid chain: Succinate--CoA ligase [ADP-forming] subunit beta (388 aa).

In terms of domain architecture, ATP-grasp spans 9-244; sequence KSLFAEYGLP…PSQDDAREAH (236 aa). ATP contacts are provided by residues Lys-46, 53-55, Glu-99, Thr-102, and Glu-107; that span reads GRG. Mg(2+) contacts are provided by Asn-199 and Asp-213. Substrate-binding positions include Asn-264 and 321–323; that span reads GIV.

This sequence belongs to the succinate/malate CoA ligase beta subunit family. In terms of assembly, heterotetramer of two alpha and two beta subunits. Mg(2+) serves as cofactor.

It carries out the reaction succinate + ATP + CoA = succinyl-CoA + ADP + phosphate. It catalyses the reaction GTP + succinate + CoA = succinyl-CoA + GDP + phosphate. It participates in carbohydrate metabolism; tricarboxylic acid cycle; succinate from succinyl-CoA (ligase route): step 1/1. Its function is as follows. Succinyl-CoA synthetase functions in the citric acid cycle (TCA), coupling the hydrolysis of succinyl-CoA to the synthesis of either ATP or GTP and thus represents the only step of substrate-level phosphorylation in the TCA. The beta subunit provides nucleotide specificity of the enzyme and binds the substrate succinate, while the binding sites for coenzyme A and phosphate are found in the alpha subunit. In Shewanella woodyi (strain ATCC 51908 / MS32), this protein is Succinate--CoA ligase [ADP-forming] subunit beta.